The sequence spans 425 residues: Serine--tRNA ligase (425 aa).

Threonine 228 to glutamate 230 contacts L-serine. Arginine 259–glutamate 261 is an ATP binding site. Glutamate 282 is a binding site for L-serine. Glutamate 346–serine 349 contributes to the ATP binding site. Serine 382 contributes to the L-serine binding site.

The protein belongs to the class-II aminoacyl-tRNA synthetase family. Type-1 seryl-tRNA synthetase subfamily. As to quaternary structure, homodimer. The tRNA molecule binds across the dimer.

It is found in the cytoplasm. The catalysed reaction is tRNA(Ser) + L-serine + ATP = L-seryl-tRNA(Ser) + AMP + diphosphate + H(+). It catalyses the reaction tRNA(Sec) + L-serine + ATP = L-seryl-tRNA(Sec) + AMP + diphosphate + H(+). Its pathway is aminoacyl-tRNA biosynthesis; selenocysteinyl-tRNA(Sec) biosynthesis; L-seryl-tRNA(Sec) from L-serine and tRNA(Sec): step 1/1. Its function is as follows. Catalyzes the attachment of serine to tRNA(Ser). Is also able to aminoacylate tRNA(Sec) with serine, to form the misacylated tRNA L-seryl-tRNA(Sec), which will be further converted into selenocysteinyl-tRNA(Sec). The polypeptide is Serine--tRNA ligase (Rickettsia rickettsii (strain Iowa)).